A 308-amino-acid polypeptide reads, in one-letter code: Acyl transferase (308 aa).

Residues Ser-116, Asp-213, and His-243 each act as charge relay system in the active site.

Belongs to the LuxD family.

It participates in lipid metabolism; fatty acid reduction for biolumincescence. Functionally, acyl transferase is part of the fatty acid reductase system required for aldehyde biosynthesis; it produces fatty acids for the luminescent reaction. The protein is Acyl transferase of Shewanella hanedai (Alteromonas hanedai).